A 707-amino-acid polypeptide reads, in one-letter code: MASEEYGEPAKHDPSFKGPIKKRGCTDIICCVLFMVFLLGYMVVGILAWLYGDPRQVIYPRNSTGMYCGIGENQGKPNVLYYDLLKCVTGTNILAAAMNGLQCPTTQVCVATCPMDFKWALPNGSPASVYIQEYCQPSINLTTTPLTVAQIAAKELCPVFLVPSTSFFNRCFPGSNLTFPSDFTINGLTANQSRANISEAASQILDSFNFQNVGKKIFEDFAKSWPWIITALVIAMVVSLLFLILLRFTAGILVWVLIVGVIGVIGYGIYHCYMEYDTLNKQGVSVSDVGFTFNLGVYFRVKETWLAILIVLAVVEAILLLVLLFLRKRILIAIALIKEASKAIGHIMSSLFYPLVTFVLLVVCVAYWGMTALYLATSGAPIYRISTVNTSVPGCENITGNETCNPMTFKPSSSCNEARCIFYRYNNEGLFQTNLFNLQIYNVIGFLWCINFVIALGQCVLAGAFASYYWAFHKPKDIPFFPVAESFMRTLRYHTGSLAFGSLILTIVQLIRIILEYVDHKLKGAQNPCTRFLLCCLKCCFWCLEKFIKFLNRNAYIMIAVYGKNFCVSAKNAFKLLMRNIVRVVVLDKVTDLLIFFGKLIVVGGVGVLAFFFFSGRIPIPNDSFKSPTLNYYWIPIITVVLGSYMIAHGFFSVYNMCVDTLFLCFLEDLERNDGSQEKPYYMSKSLMSILNKKNRPPKSEEKKKKK.

The Cytoplasmic portion of the chain corresponds to methionine 1–aspartate 27. Residues isoleucine 28–alanine 48 form a helical membrane-spanning segment. At tryptophan 49–tryptophan 225 the chain is on the extracellular side. Asparagine 62, asparagine 140, asparagine 176, asparagine 191, and asparagine 196 each carry an N-linked (GlcNAc...) asparagine glycan. Residues proline 226 to leucine 246 form a helical membrane-spanning segment. The Cytoplasmic segment spans residues arginine 247 to threonine 249. The chain crosses the membrane as a helical span at residues alanine 250–tyrosine 270. Topologically, residues histidine 271–tryptophan 305 are extracellular. The chain crosses the membrane as a helical span at residues leucine 306–leucine 326. The Cytoplasmic segment spans residues arginine 327–proline 354. The helical transmembrane segment at leucine 355–leucine 375 threads the bilayer. Residues alanine 376–asparagine 442 are Extracellular-facing. N-linked (GlcNAc...) asparagine glycans are attached at residues asparagine 389, asparagine 397, and asparagine 401. Residues valine 443 to glycine 463 form a helical membrane-spanning segment. At alanine 464 to histidine 494 the chain is on the cytoplasmic side. A helical transmembrane segment spans residues threonine 495–leucine 515. The Extracellular portion of the chain corresponds to glutamate 516–tyrosine 556. The helical transmembrane segment at isoleucine 557–leucine 577 threads the bilayer. At methionine 578 to leucine 593 the chain is on the cytoplasmic side. A helical membrane pass occupies residues leucine 594–phenylalanine 614. Residues serine 615–tyrosine 633 are Extracellular-facing. A glycan (N-linked (GlcNAc...) asparagine) is linked at asparagine 622. The chain crosses the membrane as a helical span at residues tryptophan 634 to valine 654. The Cytoplasmic portion of the chain corresponds to tyrosine 655–lysine 707.

It belongs to the CTL (choline transporter-like) family.

The protein resides in the membrane. It localises to the apical cell membrane. The enzyme catalyses choline(out) + n H(+)(in) = choline(in) + n H(+)(out). It carries out the reaction thiamine diphosphate(out) = thiamine diphosphate(in). In terms of biological role, choline transporter that seems to play a role in the choline-acetylcholine system and is required to the efferent innervation of hair cells in the olivocochlear bundle for the maintenance of physiological function of outer hair cells and the protection of hair cells from acoustic injury. Also described as a thiamine pyrophosphate transporter. Functionally, also described as a thiamine pyrophosphate transporter. This is Choline transporter-like protein 4 (slc44a4) from Xenopus laevis (African clawed frog).